An 854-amino-acid chain; its full sequence is Espin (854 aa).

ANK repeat units lie at residues 1 to 31 (MALEQALQAARQGELDVLRSLHAAGLLGPSL), 35 to 64 (LDALPVHHAARAGKLHCLRFLVEEAALPAA), 69 to 99 (NGATPAHDASATGHLACLQWLLSQGGCRVQD), 103 to 133 (SGATVLHLAARFGHPEVVNWLLHHGGGDPTA), 137 to 167 (MGALPIHYAAAKGDFPSLRLLVEHYPEGVNA), 171 to 201 (NGATPLYLACQEGHLEVTQYLVQECGADPHA), 205 to 235 (DGMTPLHAAAQMGHSPVIVWLVSCTDVSLSE), 239 to 268 (DGATAMHFAASRGHTKVLSWLLLHGGEISA), and 271 to 300 (WGGTPLHDAAENGELECCQILVVNGAELDV). Residues S338 and S342 each carry the phosphoserine modification. Positions 338–349 (SRDPSAELEAKQ) are enriched in basic and acidic residues. Disordered stretches follow at residues 338-400 (SRDP…CGLS), 415-474 (NPEL…MQTK), 487-713 (KELS…AGFQ), 765-788 (KMQEEEEQRRKEEEEEARLASMPA), and 800-832 (EEREQKRKEEERQKQEELRREKEQSEKLRTLGY). Polar residues predominate over residues 352–377 (SGMSSPNTTVSVQPLNFDLSSPTSTL). Positions 378–389 (SNYDSCSSSHSS) are enriched in low complexity. A compositionally biased stretch (pro residues) spans 428–463 (PTPPPPPPSFPPPPPPPGTQLPPPPPGYPAPKPPVG). Basic and acidic residues predominate over residues 487 to 505 (KELSSCDGHDGLRRQDSSR). A Phosphoserine modification is found at S515. The segment covering 595-620 (LPPPPPPPPPPLPEAASSPPPAPPLP) has biased composition (pro residues). Over residues 633–642 (SSSSTGSTKS) the composition is skewed to low complexity. Polar residues-rich tracts occupy residues 643–652 (FNMMSPTGDN) and 667–678 (PTPQSKGLTTVF). S647 carries the phosphoserine modification. Positions 651 to 668 (DNSELLAEIKAGKSLKPT) constitute a WH2 domain. Phosphoserine occurs at positions 690 and 696. The span at 692 to 703 (LPSVSPALSPVR) shows a compositional bias: low complexity. The stretch at 756–830 (QVMVRKMQLK…KEQSEKLRTL (75 aa)) forms a coiled coil.

In terms of assembly, monomer. Binds F-actin in a Ca(2+)-resistant fashion. Interacts (via N-terminus) with BAIAP2 (via SH3-domain). Interacts with PFN2. Interacts with MYO3A (via C-terminus). Interacts with MYO3B (via C-terminus).

The protein localises to the cytoplasm. It is found in the cytoskeleton. The protein resides in the cell projection. It localises to the stereocilium. Its subcellular location is the microvillus. Multifunctional actin-bundling protein. Plays a major role in regulating the organization, dimension, dynamics and signaling capacities of the actin filament-rich microvilli in the mechanosensory and chemosensory cells. Required for the assembly and stabilization of the stereociliary parallel actin bundles. Plays a crucial role in the formation and maintenance of inner ear hair cell stereocilia. Involved in the elongation of actin in stereocilia. In extrastriolar hair cells, required for targeting MYO3B to stereocilia tips, and for regulation of stereocilia diameter and staircase formation. The polypeptide is Espin (ESPN) (Homo sapiens (Human)).